The primary structure comprises 142 residues: Phosphoribosyl-AMP cyclohydrolase (142 aa).

D92 contributes to the Mg(2+) binding site. C93 serves as a coordination point for Zn(2+). Mg(2+) is bound by residues D94 and D96. Zn(2+) is bound by residues C109 and C116.

This sequence belongs to the PRA-CH family. As to quaternary structure, homodimer. The cofactor is Mg(2+). It depends on Zn(2+) as a cofactor.

It is found in the cytoplasm. It catalyses the reaction 1-(5-phospho-beta-D-ribosyl)-5'-AMP + H2O = 1-(5-phospho-beta-D-ribosyl)-5-[(5-phospho-beta-D-ribosylamino)methylideneamino]imidazole-4-carboxamide. It functions in the pathway amino-acid biosynthesis; L-histidine biosynthesis; L-histidine from 5-phospho-alpha-D-ribose 1-diphosphate: step 3/9. Its function is as follows. Catalyzes the hydrolysis of the adenine ring of phosphoribosyl-AMP. The sequence is that of Phosphoribosyl-AMP cyclohydrolase from Halorhodospira halophila (strain DSM 244 / SL1) (Ectothiorhodospira halophila (strain DSM 244 / SL1)).